Consider the following 230-residue polypeptide: UPF0758 protein Glov_0523 (230 aa).

Residues 108–230 (RFTSPAQVFD…YFSFVESGLL (123 aa)) form the MPN domain. The Zn(2+) site is built by His-179, His-181, and Asp-192. Residues 179–192 (HNHPSGDPAPSRED) carry the JAMM motif motif.

Belongs to the UPF0758 family.

This Trichlorobacter lovleyi (strain ATCC BAA-1151 / DSM 17278 / SZ) (Geobacter lovleyi) protein is UPF0758 protein Glov_0523.